Consider the following 821-residue polypeptide: DNA ligase (821 aa).

Residues 33–37 (DVDYD), 82–83 (SL), and Glu-113 contribute to the NAD(+) site. Lys-115 functions as the N6-AMP-lysine intermediate in the catalytic mechanism. Arg-136, Glu-173, Lys-290, and Lys-314 together coordinate NAD(+). Residues Cys-408, Cys-411, Cys-426, and Cys-432 each coordinate Zn(2+). Residues 741-821 (IVAGPLDGQT…RLLAYLAEHE (81 aa)) form the BRCT domain.

It belongs to the NAD-dependent DNA ligase family. LigA subfamily. Requires Mg(2+) as cofactor. It depends on Mn(2+) as a cofactor.

The catalysed reaction is NAD(+) + (deoxyribonucleotide)n-3'-hydroxyl + 5'-phospho-(deoxyribonucleotide)m = (deoxyribonucleotide)n+m + AMP + beta-nicotinamide D-nucleotide.. In terms of biological role, DNA ligase that catalyzes the formation of phosphodiester linkages between 5'-phosphoryl and 3'-hydroxyl groups in double-stranded DNA using NAD as a coenzyme and as the energy source for the reaction. It is essential for DNA replication and repair of damaged DNA. This is DNA ligase from Stenotrophomonas maltophilia (strain K279a).